A 399-amino-acid chain; its full sequence is Elongation factor Tu (399 aa).

The tr-type G domain occupies 10–209 (KPHVNIGTIG…EVDAYIPTPE (200 aa)). The interval 19-26 (GHVDHGKT) is G1. 19–26 (GHVDHGKT) serves as a coordination point for GTP. Thr26 contacts Mg(2+). Positions 60–64 (GITIA) are G2. The segment at 81–84 (DCPG) is G3. GTP is bound by residues 81–85 (DCPGH) and 136–139 (NKQD). A G4 region spans residues 136-139 (NKQD). Residues 174-176 (SAL) form a G5 region.

It belongs to the TRAFAC class translation factor GTPase superfamily. Classic translation factor GTPase family. EF-Tu/EF-1A subfamily. As to quaternary structure, monomer.

The protein localises to the cytoplasm. It carries out the reaction GTP + H2O = GDP + phosphate + H(+). Functionally, GTP hydrolase that promotes the GTP-dependent binding of aminoacyl-tRNA to the A-site of ribosomes during protein biosynthesis. This is Elongation factor Tu from Helicobacter pylori (strain ATCC 700392 / 26695) (Campylobacter pylori).